We begin with the raw amino-acid sequence, 228 residues long: uncharacterized protein (228 aa).

The protein to E.coli YbfG.

This is an uncharacterized protein from Haemophilus influenzae (strain ATCC 51907 / DSM 11121 / KW20 / Rd).